Reading from the N-terminus, the 236-residue chain is Uridylate kinase (236 aa).

An ATP-binding site is contributed by 10 to 13 (KLSG). Glycine 52 is a binding site for UMP. ATP is bound by residues glycine 53 and arginine 57. Residues aspartate 72 and 133–140 (TGNPFFTT) each bind UMP. ATP is bound by residues threonine 160, tyrosine 166, and aspartate 169.

Belongs to the UMP kinase family. In terms of assembly, homohexamer.

Its subcellular location is the cytoplasm. It carries out the reaction UMP + ATP = UDP + ADP. The protein operates within pyrimidine metabolism; CTP biosynthesis via de novo pathway; UDP from UMP (UMPK route): step 1/1. With respect to regulation, inhibited by UTP. Catalyzes the reversible phosphorylation of UMP to UDP. The chain is Uridylate kinase from Bacteroides thetaiotaomicron (strain ATCC 29148 / DSM 2079 / JCM 5827 / CCUG 10774 / NCTC 10582 / VPI-5482 / E50).